The following is a 166-amino-acid chain: Endoribonuclease YbeY (166 aa).

His132, His136, and His142 together coordinate Zn(2+).

Belongs to the endoribonuclease YbeY family. Zn(2+) serves as cofactor.

Its subcellular location is the cytoplasm. Single strand-specific metallo-endoribonuclease involved in late-stage 70S ribosome quality control and in maturation of the 3' terminus of the 16S rRNA. This is Endoribonuclease YbeY from Clostridium botulinum (strain Alaska E43 / Type E3).